Consider the following 386-residue polypeptide: 2,3,4,5-tetrahydropyridine-2,6-dicarboxylate N-succinyltransferase (386 aa).

Residue E257 is the Acyl-anhydride intermediate of the active site. Residues R259, G274, S277, A300, 315–316 (DA), G323, K349, and 362–365 (RQDS) each bind succinyl-CoA.

It belongs to the type 2 tetrahydrodipicolinate N-succinyltransferase family. Homotrimer.

It is found in the cytoplasm. The enzyme catalyses (S)-2,3,4,5-tetrahydrodipicolinate + succinyl-CoA + H2O = (S)-2-succinylamino-6-oxoheptanedioate + CoA. The protein operates within amino-acid biosynthesis; L-lysine biosynthesis via DAP pathway; LL-2,6-diaminopimelate from (S)-tetrahydrodipicolinate (succinylase route): step 1/3. In terms of biological role, catalyzes the conversion of the cyclic tetrahydrodipicolinate (THDP) into the acyclic N-succinyl-L-2-amino-6-oxopimelate using succinyl-CoA. In Campylobacter jejuni subsp. jejuni serotype O:2 (strain ATCC 700819 / NCTC 11168), this protein is 2,3,4,5-tetrahydropyridine-2,6-dicarboxylate N-succinyltransferase.